Consider the following 228-residue polypeptide: MRPIPAGGKFRCEATLERELRARGFRAVAGVDEVGRGALFGAVFAGAVILSEERPIRGLNDSKQLDPERREVLAGRIRERAVAWSIAAVDASTIDSINIYQASRMAMRIAVSRLSPAPDFLLVDAVPLEFAVPQRALIKGDERCHAIAAASILAKVARDECMRVWDKVFPEYGLASHKGYSTPEHYRAIEQYGPTPLHRLSFEPVRAHSRFPLDHDRQLDLFDTAGAA.

Residues 26 to 214 enclose the RNase H type-2 domain; it reads RAVAGVDEVG…VRAHSRFPLD (189 aa). Residues D32, E33, and D124 each coordinate a divalent metal cation.

It belongs to the RNase HII family. The cofactor is Mn(2+). It depends on Mg(2+) as a cofactor.

Its subcellular location is the cytoplasm. The enzyme catalyses Endonucleolytic cleavage to 5'-phosphomonoester.. Endonuclease that specifically degrades the RNA of RNA-DNA hybrids. The sequence is that of Ribonuclease HII from Solibacter usitatus (strain Ellin6076).